We begin with the raw amino-acid sequence, 513 residues long: Probable DNA ligase (513 aa).

Glutamate 213 contributes to the ATP binding site. Lysine 215 (N6-AMP-lysine intermediate) is an active-site residue. The ATP site is built by arginine 220, arginine 235, glutamate 264, phenylalanine 304, arginine 376, and lysine 382.

The protein belongs to the ATP-dependent DNA ligase family. The cofactor is Mg(2+).

The enzyme catalyses ATP + (deoxyribonucleotide)n-3'-hydroxyl + 5'-phospho-(deoxyribonucleotide)m = (deoxyribonucleotide)n+m + AMP + diphosphate.. In terms of biological role, DNA ligase that seals nicks in double-stranded DNA during DNA replication, DNA recombination and DNA repair. This is Probable DNA ligase from Anaeromyxobacter sp. (strain K).